The sequence spans 348 residues: MEQPVIPVRNIYYMLTYAWGYLQEIKQANLEAIPGNNLLDILGYVLNKGVLQLSRRGLELDYNPNTEIIPGIKGRIEFAKTIRGFHLNHGKTVSTFDMLNEDTLANRIIKSTLAILIKHEKLNSTIRDEARSLYRKLPGISTLHLTPQHFSYLNGGKNTRYYKFVISVCKFIVNNSIPGQNKGHYRFYDFERNEKEMSLLYQKFLYEFCRRELTSANTTRSYLKWDASSISDQSLNLLPRMETDITIRSSEKILIVDAKYYKSIFSRRMGTEKFHSQNLYQLMNYLWSLKPENGENIGGLLIYPHVDTAVKHRYKINGFDIGLCTVNLGQEWPCIHQELLDIFDEYLK.

Modifies the specificity of McrB restriction by expanding the range of modified sequences restricted. Does not bind to DNA. This chain is Type IV methyl-directed restriction enzyme EcoKMcrBC (mcrC), found in Escherichia coli (strain K12).